Here is a 414-residue protein sequence, read N- to C-terminus: Apolipoprotein N-acyltransferase (414 aa).

The next 6 membrane-spanning stretches (helical) occupy residues 19-39, 40-60, 63-83, 91-111, 121-141, and 153-173; these read GIALFGAILFSLFIYLHHFGI, TSPLLYSLLALLALAFYLKLP, SGFAFGFWVGIAWFYWMALSF, LIPFILLGIGGVYGVLFSMAL, LLLWLLSHVQPFGFDWMVPEV, and LSFGLILLSLSLFWLLPQRWL. One can recognise a CN hydrolase domain in the interval 202 to 414; the sequence is IETHIPQEIR…NRSPSGIIAP (213 aa). Glutamate 243 serves as the catalytic Proton acceptor. The active site involves lysine 298. Cysteine 351 serves as the catalytic Nucleophile.

It belongs to the CN hydrolase family. Apolipoprotein N-acyltransferase subfamily.

Its subcellular location is the cell inner membrane. It catalyses the reaction N-terminal S-1,2-diacyl-sn-glyceryl-L-cysteinyl-[lipoprotein] + a glycerophospholipid = N-acyl-S-1,2-diacyl-sn-glyceryl-L-cysteinyl-[lipoprotein] + a 2-acyl-sn-glycero-3-phospholipid + H(+). It functions in the pathway protein modification; lipoprotein biosynthesis (N-acyl transfer). Its function is as follows. Catalyzes the phospholipid dependent N-acylation of the N-terminal cysteine of apolipoprotein, the last step in lipoprotein maturation. The chain is Apolipoprotein N-acyltransferase from Wolinella succinogenes (strain ATCC 29543 / DSM 1740 / CCUG 13145 / JCM 31913 / LMG 7466 / NCTC 11488 / FDC 602W) (Vibrio succinogenes).